The following is a 566-amino-acid chain: Putative pentatricopeptide repeat-containing protein At1g28020 (566 aa).

PPR repeat units lie at residues 136–171 (GDSV…GLLL), 172–206 (RPVP…DVEA), 207–242 (DNVT…GIKL), 243–273 (EWHT…TEQL), 279–309 (LKSA…YKSK), 314–348 (DNNG…PLEF), 349–385 (DHRI…RMNK), 468–504 (DYSV…NVDP), and 505–540 (DLIT…GIKL).

Belongs to the PPR family. P subfamily.

This chain is Putative pentatricopeptide repeat-containing protein At1g28020, found in Arabidopsis thaliana (Mouse-ear cress).